The following is a 346-amino-acid chain: Peroxidase 19 (346 aa).

A signal peptide spans 1–31; that stretch reads MHVISLSLSSIFFFLFLTSTILISPVQPTTS. Intrachain disulfides connect C51/C134, C84/C89, C140/C342, and C219/C251. Residue H82 is the Proton acceptor of the active site. Ca(2+) is bound by residues D83, V86, G88, D90, and S92. P182 provides a ligand contact to substrate. N185 is a glycosylation site (N-linked (GlcNAc...) asparagine). H212 lines the heme b pocket. Ca(2+) is bound at residue T213. Positions 265, 268, and 273 each coordinate Ca(2+).

This sequence belongs to the peroxidase family. Classical plant (class III) peroxidase subfamily. Requires heme b as cofactor. Ca(2+) is required as a cofactor.

Its subcellular location is the secreted. The catalysed reaction is 2 a phenolic donor + H2O2 = 2 a phenolic radical donor + 2 H2O. Its function is as follows. Removal of H(2)O(2), oxidation of toxic reductants, biosynthesis and degradation of lignin, suberization, auxin catabolism, response to environmental stresses such as wounding, pathogen attack and oxidative stress. These functions might be dependent on each isozyme/isoform in each plant tissue. The chain is Peroxidase 19 (PER19) from Arabidopsis thaliana (Mouse-ear cress).